The sequence spans 445 residues: Tubulin beta-1 chain (445 aa).

The GTP site is built by Q11, E69, S138, G142, T143, G144, N204, and N226. E69 lines the Mg(2+) pocket. A disordered region spans residues Q422–E445. The segment covering G427–E445 has biased composition (acidic residues).

The protein belongs to the tubulin family. In terms of assembly, dimer of alpha and beta chains. A typical microtubule is a hollow water-filled tube with an outer diameter of 25 nm and an inner diameter of 15 nM. Alpha-beta heterodimers associate head-to-tail to form protofilaments running lengthwise along the microtubule wall with the beta-tubulin subunit facing the microtubule plus end conferring a structural polarity. Microtubules usually have 13 protofilaments but different protofilament numbers can be found in some organisms and specialized cells. Mg(2+) is required as a cofactor.

It localises to the cytoplasm. It is found in the cytoskeleton. Its function is as follows. Tubulin is the major constituent of microtubules, a cylinder consisting of laterally associated linear protofilaments composed of alpha- and beta-tubulin heterodimers. Microtubules grow by the addition of GTP-tubulin dimers to the microtubule end, where a stabilizing cap forms. Below the cap, tubulin dimers are in GDP-bound state, owing to GTPase activity of alpha-tubulin. This Colletotrichum graminicola (Maize anthracnose fungus) protein is Tubulin beta-1 chain (TUB1).